The chain runs to 268 residues: Malonyl-[acyl-carrier protein] O-methyltransferase 1 (268 aa).

It belongs to the methyltransferase superfamily.

It catalyses the reaction malonyl-[ACP] + S-adenosyl-L-methionine = malonyl-[ACP] methyl ester + S-adenosyl-L-homocysteine. It functions in the pathway cofactor biosynthesis; biotin biosynthesis. Converts the free carboxyl group of a malonyl-thioester to its methyl ester by transfer of a methyl group from S-adenosyl-L-methionine (SAM). It allows to synthesize pimeloyl-ACP via the fatty acid synthetic pathway. The protein is Malonyl-[acyl-carrier protein] O-methyltransferase 1 of Ilyobacter polytropus (strain ATCC 51220 / DSM 2926 / LMG 16218 / CuHBu1).